A 715-amino-acid chain; its full sequence is Lactococcin transport/processing ATP-binding protein LcnC-like (715 aa).

In terms of domain architecture, Peptidase C39 spans 11-138 (QVDEMDCGCA…SEWTGISLFL (128 aa)). The active site involves Cys17. Helical transmembrane passes span 167-187 (VILNIVIASFIVTLINILGSY), 197-217 (IPNALMGTLGIISVGLLLTYI), 237-257 (LAIDVILSYIRHIFQLPMSFF), 282-302 (TILSLFLDLTIVLMTGLILGL), and 307-327 (LFLLVLLAIPLYIVVIIIFTP). The 283-residue stretch at 168-450 (ILNIVIASFI…IINLQTKLQK (283 aa)) folds into the ABC transmembrane type-1 domain. The 234-residue stretch at 482-715 (LNMSEISYQY…NGFYAQLYHN (234 aa)) folds into the ABC transporter domain. 515–522 (GISGSGKS) lines the ATP pocket.

The protein belongs to the ABC transporter superfamily. HlyB family.

Its subcellular location is the cell membrane. Functionally, involved in the export process of a bacteriocin lactococcin. The sequence is that of Lactococcin transport/processing ATP-binding protein LcnC-like (lcnC) from Lactococcus lactis subsp. lactis (strain IL1403) (Streptococcus lactis).